Here is a 1521-residue protein sequence, read N- to C-terminus: Probable DNA topoisomerase 2 (1521 aa).

The span at 1–10 shows a compositional bias: acidic residues; the sequence is MSDSENDYSD. The interval 1–87 is disordered; that stretch reads MSDSENDYSD…DDKSSSSDNE (87 aa). A compositionally biased stretch (basic residues) spans 36–48; the sequence is SKKKASATRKPAA. The segment covering 49–62 has biased composition (low complexity); the sequence is KKATTTTTSTTKKS. ATP is bound by residues asparagine 163, asparagine 192, 220-222, and 233-240; these read SSH and GRNGFGAK. An interaction with DNA region spans residues 412-414; that stretch reads NKK. Residue 446 to 448 coordinates ATP; that stretch reads QTK. The 114-residue stretch at 527–640 folds into the Toprim domain; the sequence is CTLILTEGDS…TLLRMPGFLV (114 aa). The Mg(2+) site is built by glutamate 533, aspartate 609, and aspartate 611. One can recognise a Topo IIA-type catalytic domain in the interval 771–1273; it reads IPNIVDGLKT…PIQEIYKRDL (503 aa). Residue tyrosine 861 is the O-(5'-phospho-DNA)-tyrosine intermediate of the active site. Residues 1007 to 1047 form a disordered region; sequence GTRKKKKEEKEKKAASRKGTKAKPTTTKRSKRVDDDDDNEK. Over residues 1021-1037 the composition is skewed to basic residues; that stretch reads ASRKGTKAKPTTTKRSK. An interaction with DNA region spans residues 1085–1094; that stretch reads KLVSTINETN. Disordered stretches follow at residues 1192–1222 and 1335–1521; these read KIKK…EQDD and IPTT…SDSD. Residues 1201-1222 are compositionally biased toward acidic residues; sequence DEEDAAISSDEEKDGAQEEQDD. Residues 1354–1368 show a composition bias toward low complexity; the sequence is TTSTSTSTTTSSNTK. Residues 1422 to 1438 show a composition bias toward acidic residues; sequence LSDESDQESDQESDQGS. Positions 1454–1467 are enriched in low complexity; sequence PTTIATKKATTSKS. Positions 1468–1480 are enriched in basic and acidic residues; that stretch reads KVIDDKSSDDEVI. Residues 1503 to 1521 show a composition bias toward acidic residues; the sequence is SDSDDDDLYDNEESSSDSD.

Belongs to the type II topoisomerase family. Homodimer. The cofactor is Mg(2+). Requires Mn(2+) as cofactor. Ca(2+) is required as a cofactor.

It is found in the nucleus. It catalyses the reaction ATP-dependent breakage, passage and rejoining of double-stranded DNA.. In terms of biological role, control of topological states of DNA by transient breakage and subsequent rejoining of DNA strands. Topoisomerase II makes double-strand breaks. This chain is Probable DNA topoisomerase 2 (top2), found in Dictyostelium discoideum (Social amoeba).